A 239-amino-acid chain; its full sequence is Dolichyldiphosphatase (239 aa).

At 1-34 (MNSTAAAINPNPNVIPFDDTYILYDSHDFLSFLS) the chain is on the lumenal side. The chain crosses the membrane as a helical span at residues 35–55 (AYFSLMPILVLAFYLSWFIIT). At 56 to 131 (RELEACIVAF…KIYTSWKNLN (76 aa)) the chain is on the cytoplasmic side. The helical transmembrane segment at 132–152 (FLEKCIFSGALALLSFCVCFS) threads the bilayer. Residues 153 to 164 (RVYLHYHNLDQV) lie on the Lumenal side of the membrane. Residues 165–185 (IVGFSVGALTGSLYFFIVGII) form a helical membrane-spanning segment. Topologically, residues 186 to 239 (RELGLINWFLKLRIVRLFYMTDSYNLAPLTLKENYEAYWKRINQRSFNDKSKRD) are cytoplasmic.

Belongs to the dolichyldiphosphatase family.

Its subcellular location is the endoplasmic reticulum membrane. The enzyme catalyses a di-trans,poly-cis-dolichyl diphosphate + H2O = a di-trans,poly-cis-dolichyl phosphate + phosphate + H(+). It functions in the pathway protein modification; protein glycosylation. Functionally, non-essential protein which is required for efficient N-glycosylation. Necessary for maintaining optimal levels of dolichol-linked oligosaccharides. Hydrolyzes dolichyl pyrophosphate at a very high rate and dolichyl monophosphate at a much lower rate. Does not act on phosphatidate. This Saccharomyces cerevisiae (strain ATCC 204508 / S288c) (Baker's yeast) protein is Dolichyldiphosphatase (CAX4).